Reading from the N-terminus, the 257-residue chain is 5'-nucleotidase SurE (257 aa).

A divalent metal cation contacts are provided by aspartate 8, aspartate 9, serine 40, and asparagine 92.

Belongs to the SurE nucleotidase family. A divalent metal cation serves as cofactor.

Its subcellular location is the cytoplasm. It carries out the reaction a ribonucleoside 5'-phosphate + H2O = a ribonucleoside + phosphate. In terms of biological role, nucleotidase that shows phosphatase activity on nucleoside 5'-monophosphates. The protein is 5'-nucleotidase SurE of Rhizobium etli (strain ATCC 51251 / DSM 11541 / JCM 21823 / NBRC 15573 / CFN 42).